The chain runs to 264 residues: 3-methyl-2-oxobutanoate hydroxymethyltransferase (264 aa).

Residues aspartate 45 and aspartate 84 each coordinate Mg(2+). Residues 45–46 (DS), aspartate 84, and lysine 113 contribute to the 3-methyl-2-oxobutanoate site. Residue glutamate 115 participates in Mg(2+) binding. Residue glutamate 182 is the Proton acceptor of the active site.

Belongs to the PanB family. As to quaternary structure, homodecamer; pentamer of dimers. The cofactor is Mg(2+).

It localises to the cytoplasm. It catalyses the reaction 3-methyl-2-oxobutanoate + (6R)-5,10-methylene-5,6,7,8-tetrahydrofolate + H2O = 2-dehydropantoate + (6S)-5,6,7,8-tetrahydrofolate. It functions in the pathway cofactor biosynthesis; (R)-pantothenate biosynthesis; (R)-pantoate from 3-methyl-2-oxobutanoate: step 1/2. Its function is as follows. Catalyzes the reversible reaction in which hydroxymethyl group from 5,10-methylenetetrahydrofolate is transferred onto alpha-ketoisovalerate to form ketopantoate. The polypeptide is 3-methyl-2-oxobutanoate hydroxymethyltransferase (Caldicellulosiruptor bescii (strain ATCC BAA-1888 / DSM 6725 / KCTC 15123 / Z-1320) (Anaerocellum thermophilum)).